We begin with the raw amino-acid sequence, 119 residues long: Large ribosomal subunit protein bL20 (119 aa).

It belongs to the bacterial ribosomal protein bL20 family.

Its function is as follows. Binds directly to 23S ribosomal RNA and is necessary for the in vitro assembly process of the 50S ribosomal subunit. It is not involved in the protein synthesizing functions of that subunit. This chain is Large ribosomal subunit protein bL20, found in Enterococcus faecalis (strain ATCC 700802 / V583).